Reading from the N-terminus, the 652-residue chain is Phosphomethylpyrimidine synthase (652 aa).

Substrate-binding positions include asparagine 257, methionine 286, tyrosine 315, histidine 351, 371–373, 412–415, and glutamate 451; these read SRG and DGLR. A Zn(2+)-binding site is contributed by histidine 455. Residue tyrosine 478 participates in substrate binding. A Zn(2+)-binding site is contributed by histidine 519. Residues cysteine 599, cysteine 602, and cysteine 607 each contribute to the [4Fe-4S] cluster site.

It belongs to the ThiC family. As to quaternary structure, homodimer. Requires [4Fe-4S] cluster as cofactor.

The catalysed reaction is 5-amino-1-(5-phospho-beta-D-ribosyl)imidazole + S-adenosyl-L-methionine = 4-amino-2-methyl-5-(phosphooxymethyl)pyrimidine + CO + 5'-deoxyadenosine + formate + L-methionine + 3 H(+). Its pathway is cofactor biosynthesis; thiamine diphosphate biosynthesis. Functionally, catalyzes the synthesis of the hydroxymethylpyrimidine phosphate (HMP-P) moiety of thiamine from aminoimidazole ribotide (AIR) in a radical S-adenosyl-L-methionine (SAM)-dependent reaction. The sequence is that of Phosphomethylpyrimidine synthase from Thiobacillus denitrificans (strain ATCC 25259 / T1).